Reading from the N-terminus, the 297-residue chain is Phosphatidylglycerol--prolipoprotein diacylglyceryl transferase (297 aa).

Helical transmembrane passes span 20–40 (FLTIRWYGLLISISVVIGLFI), 58–78 (ILPSLIISSIIGARAYYVIFE), 104–124 (IAIWQGGIAIHGGLIGGFLCI), and 133–153 (IHLKTFIDILIPSIILGQSIG). Arg154 contacts a 1,2-diacyl-sn-glycero-3-phospho-(1'-sn-glycerol). 3 consecutive transmembrane segments (helical) span residues 194–214 (TFIYESLWNFLIFILLITIFY), 225–245 (GFISCLYLIGYSFGRFWIEGL), and 266–286 (AQFISIFLFSSGLIGLFFLRL).

This sequence belongs to the Lgt family.

It is found in the cell inner membrane. It carries out the reaction L-cysteinyl-[prolipoprotein] + a 1,2-diacyl-sn-glycero-3-phospho-(1'-sn-glycerol) = an S-1,2-diacyl-sn-glyceryl-L-cysteinyl-[prolipoprotein] + sn-glycerol 1-phosphate + H(+). The protein operates within protein modification; lipoprotein biosynthesis (diacylglyceryl transfer). Functionally, catalyzes the transfer of the diacylglyceryl group from phosphatidylglycerol to the sulfhydryl group of the N-terminal cysteine of a prolipoprotein, the first step in the formation of mature lipoproteins. The protein is Phosphatidylglycerol--prolipoprotein diacylglyceryl transferase of Prochlorococcus marinus subsp. pastoris (strain CCMP1986 / NIES-2087 / MED4).